The chain runs to 364 residues: tRNA-specific 2-thiouridylase MnmA 1 (364 aa).

Residues 10–17 (GMSGGVDS) and M36 each bind ATP. The active-site Nucleophile is C106. C106 and C204 are disulfide-bonded. Residue G130 participates in ATP binding. Residues 154 to 156 (KDQ) form an interaction with tRNA region. Catalysis depends on C204, which acts as the Cysteine persulfide intermediate. An interaction with tRNA region spans residues 310–311 (RY).

Belongs to the MnmA/TRMU family.

Its subcellular location is the cytoplasm. The enzyme catalyses S-sulfanyl-L-cysteinyl-[protein] + uridine(34) in tRNA + AH2 + ATP = 2-thiouridine(34) in tRNA + L-cysteinyl-[protein] + A + AMP + diphosphate + H(+). Functionally, catalyzes the 2-thiolation of uridine at the wobble position (U34) of tRNA, leading to the formation of s(2)U34. The sequence is that of tRNA-specific 2-thiouridylase MnmA 1 from Thermoanaerobacter sp. (strain X514).